The following is a 320-amino-acid chain: MPSISVRRLFDDNQYKLQLAWAAGNSGADNRIGVEADKPVLALVGHLNFIHPNQIQVVGLAESEYLNRLESGETGYQFGDLFDISMSLVIVANDLPVSPGLRDYCHKNDIPLLTSKLESPYLMDVLRIYLQRTLAASSVKHGVFLDVFEIGVLITGHSGLGKSELALELISRGHSLIADDAVELFRIGPETLEGRCSPMLRDFLEVRGLGILNIRHIFGETSIRPKKILQLIINLVEADDEYMKQLDRLSIRTETESILNVNVRSVTLPVAVGRNLAVLVEAAVRNYILQLRGKDSTREFLERHQTQLKENEQNHENRPD.

Active-site residues include histidine 141 and lysine 162. 156 to 163 (GHSGLGKS) is a binding site for ATP. Serine 163 contacts Mg(2+). The active-site Proton acceptor; for phosphorylation activity. Proton donor; for dephosphorylation activity is aspartate 180. Residues 204 to 213 (LEVRGLGILN) form an important for the catalytic mechanism of both phosphorylation and dephosphorylation region. Residue glutamate 205 participates in Mg(2+) binding. The active site involves arginine 248. Positions 269-274 (PVAVGR) are important for the catalytic mechanism of dephosphorylation.

It belongs to the HPrK/P family. In terms of assembly, homohexamer. Requires Mg(2+) as cofactor.

It carries out the reaction [HPr protein]-L-serine + ATP = [HPr protein]-O-phospho-L-serine + ADP + H(+). It catalyses the reaction [HPr protein]-O-phospho-L-serine + phosphate + H(+) = [HPr protein]-L-serine + diphosphate. In terms of biological role, catalyzes the ATP- as well as the pyrophosphate-dependent phosphorylation of a specific serine residue in HPr, a phosphocarrier protein of the phosphoenolpyruvate-dependent sugar phosphotransferase system (PTS). HprK/P also catalyzes the pyrophosphate-producing, inorganic phosphate-dependent dephosphorylation (phosphorolysis) of seryl-phosphorylated HPr (P-Ser-HPr). The protein is HPr kinase/phosphorylase of Neisseria gonorrhoeae (strain ATCC 700825 / FA 1090).